We begin with the raw amino-acid sequence, 663 residues long: CXXC-type zinc finger protein 1 (663 aa).

The PHD-type zinc-finger motif lies at 60–110 (QAYCICRSSDCSRFMIGCDGCEEWYHGDCIGITEKEAKHIKQYYCRRCKKE). Low complexity predominate over residues 134 to 161 (TSLNAPGVGPSGAAPAAAPVASATTSQQ). Residues 134–183 (TSLNAPGVGPSGAAPAAAPVASATTSQQAPPPTTAAAKRKNSSAREPKMG) form a disordered region. The segment at 175–219 (SSAREPKMGKRCGTCEGCRRPNCNQCDACRVRVGHKPRCIFRTCV) adopts a CXXC-type zinc-finger fold. Residues Cys186, Cys189, Cys192, Cys197, Cys200, Cys203, Cys213, and Cys218 each coordinate Zn(2+). Residues 230 to 254 (QATQAGPSRKREKAAPKSRNVQVGP) form a disordered region. A Phosphoserine modification is found at Ser258.

In terms of assembly, component of the SET1 complex, composed at least of the catalytic subunit Set1, wds/WDR5, Wdr82, Rbbp5, ash2, Cfp1/CXXC1, hcf and Dpy-30L1.

The protein localises to the nucleus. Functionally, component of the SET1 complex that specifically di- and trimethylates 'Lys-4' of histone H3. Essential for Set1 association with chromatin and trimethylation of histone H3 at 'Lys-4' at transcription puffs. Additionally, is critical for general chromosomal association of Set1. This chain is CXXC-type zinc finger protein 1 (Cfp1), found in Drosophila melanogaster (Fruit fly).